Reading from the N-terminus, the 133-residue chain is p53 and DNA damage-regulated protein 1 (133 aa).

This sequence belongs to the prefoldin subunit beta family. In terms of assembly, component of the PAQosome complex which is responsible for the biogenesis of several protein complexes and which consists of R2TP complex members RUVBL1, RUVBL2, RPAP3 and PIH1D1, URI complex members PFDN2, PFDN6, PDRG1, UXT and URI1 as well as ASDURF, POLR2E and DNAAF10/WDR92.

It localises to the cytoplasm. Functionally, may play a role in chaperone-mediated protein folding. The sequence is that of p53 and DNA damage-regulated protein 1 (Pdrg1) from Rattus norvegicus (Rat).